The sequence spans 271 residues: MSRIQQTFAALAQQGRKGLIPFITAGDPDPAKTVEFMHALAAGGADVIELGVPFSDPMADGPVIQRSSERALARGVTLKHVLADVKRFRETNQTTPVVLMGYANPIERHGVDAFAADARAAGVDGVLVVDYPPEEAAVFAEKMRAAGIDPIFLLAPTSTDARIAEVGKIASGYVYYVSLKGVTGAGNLDVSSIAGKIPAIKSRVPVPVGVGFGIRDAETARAVAEVSDAVVIGSRLVQLLESAAPEGAVAALQAFIAELRAALDGAANTAR.

Residues glutamate 49 and aspartate 60 each act as proton acceptor in the active site.

It belongs to the TrpA family. Tetramer of two alpha and two beta chains.

The enzyme catalyses (1S,2R)-1-C-(indol-3-yl)glycerol 3-phosphate + L-serine = D-glyceraldehyde 3-phosphate + L-tryptophan + H2O. It participates in amino-acid biosynthesis; L-tryptophan biosynthesis; L-tryptophan from chorismate: step 5/5. In terms of biological role, the alpha subunit is responsible for the aldol cleavage of indoleglycerol phosphate to indole and glyceraldehyde 3-phosphate. The sequence is that of Tryptophan synthase alpha chain from Burkholderia multivorans (strain ATCC 17616 / 249).